A 236-amino-acid polypeptide reads, in one-letter code: 2-C-methyl-D-erythritol 4-phosphate cytidylyltransferase (236 aa).

This sequence belongs to the IspD/TarI cytidylyltransferase family. IspD subfamily.

It carries out the reaction 2-C-methyl-D-erythritol 4-phosphate + CTP + H(+) = 4-CDP-2-C-methyl-D-erythritol + diphosphate. The protein operates within isoprenoid biosynthesis; isopentenyl diphosphate biosynthesis via DXP pathway; isopentenyl diphosphate from 1-deoxy-D-xylulose 5-phosphate: step 2/6. In terms of biological role, catalyzes the formation of 4-diphosphocytidyl-2-C-methyl-D-erythritol from CTP and 2-C-methyl-D-erythritol 4-phosphate (MEP). The sequence is that of 2-C-methyl-D-erythritol 4-phosphate cytidylyltransferase from Pseudomonas syringae pv. tomato (strain ATCC BAA-871 / DC3000).